Here is a 382-residue protein sequence, read N- to C-terminus: ATP phosphoribosyltransferase regulatory subunit (382 aa).

It belongs to the class-II aminoacyl-tRNA synthetase family. HisZ subfamily. Heteromultimer composed of HisG and HisZ subunits.

The protein localises to the cytoplasm. It participates in amino-acid biosynthesis; L-histidine biosynthesis; L-histidine from 5-phospho-alpha-D-ribose 1-diphosphate: step 1/9. Its function is as follows. Required for the first step of histidine biosynthesis. May allow the feedback regulation of ATP phosphoribosyltransferase activity by histidine. The chain is ATP phosphoribosyltransferase regulatory subunit from Burkholderia lata (strain ATCC 17760 / DSM 23089 / LMG 22485 / NCIMB 9086 / R18194 / 383).